A 153-amino-acid polypeptide reads, in one-letter code: Mediator of RNA polymerase II transcription subunit 31 (153 aa).

2 disordered regions span residues 1–28 (MTLG…RRQA) and 125–153 (RDPE…GQTA).

The protein belongs to the Mediator complex subunit 31 family. Component of the Mediator complex.

It localises to the nucleus. Component of the Mediator complex, a coactivator involved in the regulated transcription of nearly all RNA polymerase II-dependent genes. Mediator functions as a bridge to convey information from gene-specific regulatory proteins to the basal RNA polymerase II transcription machinery. Mediator is recruited to promoters by direct interactions with regulatory proteins and serves as a scaffold for the assembly of a functional preinitiation complex with RNA polymerase II and the general transcription factors. The polypeptide is Mediator of RNA polymerase II transcription subunit 31 (SOH1) (Mycosarcoma maydis (Corn smut fungus)).